The following is a 196-amino-acid chain: Pro-FMRFamide-related neuropeptide VF (196 aa).

Positions 1-21 (MEIISLKRFILLMLATSSLLT) are cleaved as a signal peptide. Positions 22-57 (SNIFCTDESRIPSLYSKKNYDKYSEPRGDLGWEKER) are excised as a propeptide. Residue Phe-92 is modified to Phenylalanine amide. Propeptides lie at residues 95 to 99 (NMEEE) and 115 to 121 (NREDSLS). Phe-131 carries the phenylalanine amide modification. The propeptide occupies 134–196 (TIAAKSITKT…IDDAELKQEK (63 aa)).

Belongs to the FARP (FMRFamide related peptide) family. In terms of tissue distribution, expressed in hypothalamus, where it is localized to the dorsomedial hypothalamic nucleus (DMH), paraventricular nucleus (PVN), and to neuronal projections from the PVN to the neurosecretory zone of the median eminence.

It localises to the secreted. May act in concert with kisspeptin, through opposing affects, to regulate the activity of gonadotropin-releasing hormone (GnRH) neurons across the seasons, leading to an annual change in fertility and the cyclical seasonal transition from non-breeding to breeding season. Its function is as follows. Efficiently inhibits forskolin-induced production of cAMP. Acts as a potent negative regulator of gonadotropin synthesis and secretion. Induces secretion of prolactin. Functionally, efficiently inhibits forskolin-induced production of cAMP. Blocks morphine-induced analgesia. In terms of biological role, shows no inhibitory activity of forskolin-induced production of cAMP. The sequence is that of Pro-FMRFamide-related neuropeptide VF from Ovis aries (Sheep).